The chain runs to 260 residues: LIM and SH3 domain protein 1 (260 aa).

Met1 is subject to N-acetylmethionine. Residues 5–56 (CARCCKIVYPTEKVNCLDKFWHKACFHCETCKMTLNMKNYKGYEKKPYCNAH) form the LIM zinc-binding domain. An N6-acetyllysine modification is found at Lys42. 2 Nebulin repeats span residues 61–95 (SFTM…KNKG) and 97–131 (GFSV…KSRM). The residue at position 68 (Thr68) is a Phosphothreonine. Position 75 is an N6-methyllysine (Lys75). Ser99 is subject to Phosphoserine. The residue at position 104 (Thr104) is a Phosphothreonine. N6-succinyllysine is present on Lys112. Phosphoserine is present on residues Ser118 and Ser134. The interval 123-204 (HEEFEKSRMG…QRSAPGGGGK (82 aa)) is disordered. Residues 140-155 (ECERRDPQESSYRRPQ) show a composition bias toward basic and acidic residues. Over residues 171–180 (QQPQQQPAAQ) the composition is skewed to low complexity. The SH3 domain occupies 201-260 (GGGKRYRAVYDYSAADEDEVSFQDGDTIVNVQQIDDGWMYGTVERTGDTGMLPANYVEAI).

Interacts with F-actin. Interacts with ANKRD54. Interacts with KBTBD10. Post-translationally, phosphorylated.

Its subcellular location is the cytoplasm. The protein resides in the cell cortex. The protein localises to the cytoskeleton. Plays an important role in the regulation of dynamic actin-based, cytoskeletal activities. Agonist-dependent changes in LASP1 phosphorylation may also serve to regulate actin-associated ion transport activities, not only in the parietal cell but also in certain other F-actin-rich secretory epithelial cell types. The sequence is that of LIM and SH3 domain protein 1 (LASP1) from Bos taurus (Bovine).